We begin with the raw amino-acid sequence, 372 residues long: MDRGIDLQGTFIQSLESLGLSPGLSKVLWMPLPMLLMIIAATVGVLVTVWLERKISAAVQQRIGPEYAGPLGVLQSAADGLKLILKEDIIPAKADAFLFTIGPALVVIPVFLSYLIVPFGQELIITNVGAGVFLWIALSSIQPIGLLMSGYASNNKYSLLGGLRAAAQSISYEIPLALAVLAVVMMSNSLSTIDIVDQQSGYGILGWNIWRQPVGFIIFWIAALAECERLPFDLPEAEEELVAGYQTEYAGMKFALFYVGSYVNLILSALLVSILYLGGWEFPIPLDRVADWIGVDPANPILQITTAALGITMTVLKAYLLVFTAILLRWTVPRVRIDQLLDLGWKFLLPISLVNLLVTAALKLTFPVAFGG.

8 consecutive transmembrane segments (helical) span residues 27–47, 97–117, 128–148, 176–196, 204–224, 254–274, 308–328, and 347–367; these read VLWM…GVLV, FLFT…YLIV, VGAG…GLLM, LALA…IDIV, ILGW…IAAL, FALF…LVSI, ALGI…AILL, and FLLP…LTFP.

This sequence belongs to the complex I subunit 1 family. As to quaternary structure, NDH-1 is composed of at least 11 different subunits.

It is found in the cellular thylakoid membrane. The catalysed reaction is a plastoquinone + NADH + (n+1) H(+)(in) = a plastoquinol + NAD(+) + n H(+)(out). The enzyme catalyses a plastoquinone + NADPH + (n+1) H(+)(in) = a plastoquinol + NADP(+) + n H(+)(out). In terms of biological role, NDH-1 shuttles electrons from an unknown electron donor, via FMN and iron-sulfur (Fe-S) centers, to quinones in the respiratory and/or the photosynthetic chain. The immediate electron acceptor for the enzyme in this species is believed to be plastoquinone. Couples the redox reaction to proton translocation, and thus conserves the redox energy in a proton gradient. This Synechococcus elongatus (strain ATCC 33912 / PCC 7942 / FACHB-805) (Anacystis nidulans R2) protein is NAD(P)H-quinone oxidoreductase subunit 1.